Consider the following 364-residue polypeptide: Putative acetyl-CoA C-acetyltransferase YhfS (364 aa).

C82 serves as the catalytic Acyl-thioester intermediate. Residue H318 is the Proton acceptor of the active site.

Belongs to the thiolase-like superfamily. Thiolase family.

May be involved in fatty acid metabolism. This chain is Putative acetyl-CoA C-acetyltransferase YhfS (yhfS), found in Bacillus subtilis (strain 168).